The primary structure comprises 292 residues: ATP synthase gamma chain (292 aa).

The protein belongs to the ATPase gamma chain family. F-type ATPases have 2 components, CF(1) - the catalytic core - and CF(0) - the membrane proton channel. CF(1) has five subunits: alpha(3), beta(3), gamma(1), delta(1), epsilon(1). CF(0) has three main subunits: a, b and c.

The protein localises to the cell inner membrane. Produces ATP from ADP in the presence of a proton gradient across the membrane. The gamma chain is believed to be important in regulating ATPase activity and the flow of protons through the CF(0) complex. The polypeptide is ATP synthase gamma chain (Syntrophobacter fumaroxidans (strain DSM 10017 / MPOB)).